Consider the following 194-residue polypeptide: Peptidyl-tRNA hydrolase (194 aa).

Tyr-16 provides a ligand contact to tRNA. Catalysis depends on His-21, which acts as the Proton acceptor. Phe-67, Asn-69, and Asn-115 together coordinate tRNA.

It belongs to the PTH family. Monomer.

Its subcellular location is the cytoplasm. The enzyme catalyses an N-acyl-L-alpha-aminoacyl-tRNA + H2O = an N-acyl-L-amino acid + a tRNA + H(+). In terms of biological role, hydrolyzes ribosome-free peptidyl-tRNAs (with 1 or more amino acids incorporated), which drop off the ribosome during protein synthesis, or as a result of ribosome stalling. Catalyzes the release of premature peptidyl moieties from peptidyl-tRNA molecules trapped in stalled 50S ribosomal subunits, and thus maintains levels of free tRNAs and 50S ribosomes. The polypeptide is Peptidyl-tRNA hydrolase (Salmonella heidelberg (strain SL476)).